Reading from the N-terminus, the 318-residue chain is Aspartate carbamoyltransferase catalytic subunit (318 aa).

2 residues coordinate carbamoyl phosphate: Arg-56 and Thr-57. L-aspartate is bound at residue Lys-84. Carbamoyl phosphate contacts are provided by Arg-106, His-143, and Gln-146. L-aspartate is bound by residues Arg-176 and Arg-230. Positions 271 and 272 each coordinate carbamoyl phosphate.

It belongs to the aspartate/ornithine carbamoyltransferase superfamily. ATCase family. In terms of assembly, heterododecamer (2C3:3R2) of six catalytic PyrB chains organized as two trimers (C3), and six regulatory PyrI chains organized as three dimers (R2).

It carries out the reaction carbamoyl phosphate + L-aspartate = N-carbamoyl-L-aspartate + phosphate + H(+). Its pathway is pyrimidine metabolism; UMP biosynthesis via de novo pathway; (S)-dihydroorotate from bicarbonate: step 2/3. Functionally, catalyzes the condensation of carbamoyl phosphate and aspartate to form carbamoyl aspartate and inorganic phosphate, the committed step in the de novo pyrimidine nucleotide biosynthesis pathway. The chain is Aspartate carbamoyltransferase catalytic subunit from Mycobacterium avium (strain 104).